We begin with the raw amino-acid sequence, 618 residues long: Chaperone protein DnaK (618 aa).

Thr-175 is subject to Phosphothreonine; by autocatalysis. The segment at 576–618 (SQNAEPGADGGANSGANPGGTTGNTDTKDDNVVDAEYKVDDDK) is disordered. A compositionally biased stretch (gly residues) spans 583–597 (ADGGANSGANPGGTT). The segment covering 601–618 (DTKDDNVVDAEYKVDDDK) has biased composition (basic and acidic residues).

This sequence belongs to the heat shock protein 70 family.

In terms of biological role, acts as a chaperone. The protein is Chaperone protein DnaK of Clostridium kluyveri (strain NBRC 12016).